We begin with the raw amino-acid sequence, 178 residues long: Translation initiation factor IF-3 (178 aa).

The protein belongs to the IF-3 family. In terms of assembly, monomer.

The protein resides in the cytoplasm. Its function is as follows. IF-3 binds to the 30S ribosomal subunit and shifts the equilibrium between 70S ribosomes and their 50S and 30S subunits in favor of the free subunits, thus enhancing the availability of 30S subunits on which protein synthesis initiation begins. The chain is Translation initiation factor IF-3 from Legionella pneumophila (strain Paris).